The primary structure comprises 101 residues: uncharacterized protein (101 aa).

This is an uncharacterized protein from Saccharomyces cerevisiae (strain ATCC 204508 / S288c) (Baker's yeast).